The following is a 1679-amino-acid chain: Protein MLP2 (1679 aa).

Coiled coils occupy residues 32-176 (AKFE…KYDT), 233-466 (YNKF…RQVK), 516-1064 (FSNV…EREL), and 1099-1491 (KLVS…ENAG). 3 consecutive short sequence motifs (bipartite nuclear localization signal) follow at residues 417–433 (KRST…KRKQ), 639–655 (RKEL…KKTT), and 1433–1449 (KKEW…RRIK). Disordered regions lie at residues 1495 to 1521 (FLDN…SERP) and 1632 to 1679 (DLTN…ASNE). Polar residues-rich tracts occupy residues 1511–1520 (NSPSKGNSER) and 1646–1661 (IGST…TSSD). Residue Ser-1512 is modified to Phosphoserine. Positions 1662-1671 (PDTKKVKESP) are enriched in basic and acidic residues. Ser-1670 is subject to Phosphoserine.

As to quaternary structure, component of the nuclear complex (NPC). NPC constitutes the exclusive means of nucleocytoplasmic transport. NPCs allow the passive diffusion of ions and small molecules and the active, nuclear transport receptor-mediated bidirectional transport of macromolecules such as proteins, RNAs, ribonucleoparticles (RNPs), and ribosomal subunits across the nuclear envelope. Due to its 8-fold rotational symmetry, all subunits are present with 8 copies or multiples thereof. Interacts with NUP60 and NIC96, which tether it to the nuclear pore complex. Component of the spindle pole body core in which it interacts directly with SPC110, SPC42 and SPC29. Also interacts with YKU70 (HDF1) and MLP1.

The protein resides in the nucleus. It is found in the cytoplasm. Its subcellular location is the cytoskeleton. The protein localises to the microtubule organizing center. It localises to the spindle pole body. The protein resides in the nuclear pore complex. Together with the closely related MLP1, involved in the structural and functional organization of perinuclear chromatin. MLP1/MLP2 associate with the nuclear pore complex and form filamentous structures along the nuclear periphery. Has a role in the localization of Esc1 to nucleolar regions. Together with MLP1, mediates tethering of the some telomeres to the nuclear periphery, probably mediated by YKU70/YKU80 (HDF1/HDF2) heterodimer and show perinuclear location dependent silencing. MLP1 and MLP2 are involved in telomere length regulation but not silencing or telomere anchoring. Plays a role in the incorporation of components into the spindle pole body. Involved in double-strand break repair, probably also mediated by the YKU70/YKU80 (HDF1/HDF2) heterodimer. This is Protein MLP2 (MLP2) from Saccharomyces cerevisiae (strain ATCC 204508 / S288c) (Baker's yeast).